Reading from the N-terminus, the 93-residue chain is PqqA binding protein (93 aa).

This sequence belongs to the PqqD family. Monomer. Interacts with PqqE.

Its pathway is cofactor biosynthesis; pyrroloquinoline quinone biosynthesis. Functionally, functions as a PqqA binding protein and presents PqqA to PqqE, in the pyrroloquinoline quinone (PQQ) biosynthetic pathway. In Methylococcus capsulatus (strain ATCC 33009 / NCIMB 11132 / Bath), this protein is PqqA binding protein.